A 172-amino-acid chain; its full sequence is RNA pyrophosphohydrolase (172 aa).

Positions 6-149 (GFRANVGIII…KRDVYRKVMK (144 aa)) constitute a Nudix hydrolase domain. Residues 38-59 (GGLDDGESVEEAMYRELYEEVG) carry the Nudix box motif.

The protein belongs to the Nudix hydrolase family. RppH subfamily. The cofactor is a divalent metal cation.

Functionally, accelerates the degradation of transcripts by removing pyrophosphate from the 5'-end of triphosphorylated RNA, leading to a more labile monophosphorylated state that can stimulate subsequent ribonuclease cleavage. The polypeptide is RNA pyrophosphohydrolase (Shewanella frigidimarina (strain NCIMB 400)).